Reading from the N-terminus, the 285-residue chain is HTH-type transcriptional activator AmpR (285 aa).

In terms of domain architecture, HTH lysR-type spans 5–62 (LPLNALRAFEASARHLSFTRAALELCVTQAAVSQQVRILEDRLNRVLFKRLPRGLEMT). Positions 22 to 41 (FTRAALELCVTQAAVSQQVR) form a DNA-binding region, H-T-H motif.

It belongs to the LysR transcriptional regulatory family.

The protein resides in the cytoplasm. Functionally, this protein is a positive regulator of gene expression of beta-lactamase (AmpC). This Citrobacter koseri (Citrobacter diversus) protein is HTH-type transcriptional activator AmpR (ampR).